A 549-amino-acid chain; its full sequence is Cilia- and flagella-associated protein 45 (549 aa).

Residues Met1–Thr27 are disordered. 2 coiled-coil regions span residues Lys119 to Val232 and Ile259 to Gln393. The segment at Arg391–Ala416 is disordered.

It belongs to the CFAP45 family. In terms of assembly, microtubule inner protein component of sperm flagellar doublet microtubules. Interacts with AK8; dimerization with AK8 may create a cavity at the interface of the dimer that can accommodate AMP. Interacts with CFAP52. Interacts with ENKUR. Directly interacts with DNALI1. Interacts with DNAH11. Interacts with DNAI1. As to expression, expressed in trachea multiciliated cells.

It is found in the cytoplasm. The protein localises to the cytoskeleton. Its subcellular location is the cilium axoneme. The protein resides in the flagellum axoneme. It localises to the cell projection. It is found in the cilium. The protein localises to the flagellum. Functionally, microtubule inner protein (MIP) part of the dynein-decorated doublet microtubules (DMTs) in cilia axoneme, which is required for motile cilia beating. It is an AMP-binding protein that may facilitate dynein ATPase-dependent ciliary and flagellar beating via adenine nucleotide homeostasis. May function as a donor of AMP to AK8 and hence promote ADP production. This Bos taurus (Bovine) protein is Cilia- and flagella-associated protein 45.